Consider the following 448-residue polypeptide: uncharacterized protein (448 aa).

Residues 1 to 50 (MAPEIFVKFKCASRDIKLLWASVFLRLLSYGLTNQVLTLFLNAINMTEDK) lie on the Extracellular side of the membrane. Residues 51–71 (IGLFMSLTLAGDVICSYILTW) form a helical membrane-spanning segment. Over 72–93 (YADSWGRRRVLVYGCAMMLLSG) the chain is Cytoplasmic. A helical transmembrane segment spans residues 94-114 (LVFSFSENFTLLLVFAIFGVI). The Extracellular portion of the chain corresponds to 115–146 (SPSSDEVGPFKSIEEAMIAHLSPHNARPEIYA). A helical membrane pass occupies residues 147–167 (IHALVGTIGSALGAIICGIFV). Topologically, residues 168-184 (DLLKRTGLAATDLQCYK) are cytoplasmic. Residues 185–205 (LVFLLYAFFAFCKMVIMLLLS) form a helical membrane-spanning segment. The Extracellular portion of the chain corresponds to 206–260 (DATELDGHYEHTDCNEETAEPLDVNDETAPLMRQATHPEERSNKLSKETVSVLMK). The helical transmembrane segment at 261 to 281 (LLVIFMVDSLGSGFMTSGWMV) threads the bilayer. At 282–287 (YYYSKQ) the chain is on the cytoplasmic side. Residues 288–308 (FLMGSLALGTLFFITQLVMAS) traverse the membrane as a helical segment. The Extracellular segment spans residues 309-333 (STIPSSIIARCFGPVRATLLVQIPS). The chain crosses the membrane as a helical span at residues 334 to 354 (GIFSILIPMAKNYLPLSILFL). Topologically, residues 355 to 386 (NLHFATTAMDVTPRQILLTNIIKPRDLTKVMG) are cytoplasmic. 386–393 (GVVNIGKT) serves as a coordination point for ATP. Residues 387 to 407 (VVNIGKTFARCVGPIFTGILA) traverse the membrane as a helical segment. Residues 408–416 (NNNYLWLCY) lie on the Extracellular side of the membrane. A helical transmembrane segment spans residues 417 to 437 (IISGSLVITADLILACMFLGV). Over 438 to 448 (DAKIKKQMNRH) the chain is Cytoplasmic.

The protein resides in the membrane. This is an uncharacterized protein from Saccharomyces cerevisiae (strain ATCC 204508 / S288c) (Baker's yeast).